The following is a 754-amino-acid chain: Polyribonucleotide nucleotidyltransferase (754 aa).

Aspartate 525 and aspartate 531 together coordinate Mg(2+). The KH domain occupies 591–650 (PRITTIKVPVDKIGEVIGPKGKMINSITEETGASISIEDDGTVFVGASNGEAAQAAIDKI). Residues 662-731 (GERFLGTVVK…NRGKISLVLV (70 aa)) form the S1 motif domain.

Belongs to the polyribonucleotide nucleotidyltransferase family. It depends on Mg(2+) as a cofactor.

It is found in the cytoplasm. It catalyses the reaction RNA(n+1) + phosphate = RNA(n) + a ribonucleoside 5'-diphosphate. Involved in mRNA degradation. Catalyzes the phosphorolysis of single-stranded polyribonucleotides processively in the 3'- to 5'-direction. The sequence is that of Polyribonucleotide nucleotidyltransferase from Mycolicibacterium vanbaalenii (strain DSM 7251 / JCM 13017 / BCRC 16820 / KCTC 9966 / NRRL B-24157 / PYR-1) (Mycobacterium vanbaalenii).